Consider the following 445-residue polypeptide: Phosphoglucosamine mutase (445 aa).

Residue serine 102 is the Phosphoserine intermediate of the active site. 4 residues coordinate Mg(2+): serine 102, aspartate 241, aspartate 243, and aspartate 245. Serine 102 is subject to Phosphoserine.

It belongs to the phosphohexose mutase family. Mg(2+) is required as a cofactor. Post-translationally, activated by phosphorylation.

It catalyses the reaction alpha-D-glucosamine 1-phosphate = D-glucosamine 6-phosphate. In terms of biological role, catalyzes the conversion of glucosamine-6-phosphate to glucosamine-1-phosphate. In Shewanella oneidensis (strain ATCC 700550 / JCM 31522 / CIP 106686 / LMG 19005 / NCIMB 14063 / MR-1), this protein is Phosphoglucosamine mutase.